Reading from the N-terminus, the 277-residue chain is Transmembrane protein 53 (277 aa).

The chain crosses the membrane as a helical span at residues Leu171–Ile191.

The protein belongs to the TMEM53 family. In terms of tissue distribution, widely expressed.

It is found in the nucleus outer membrane. Functionally, ensures normal bone formation, through the negative regulation of bone morphogenetic protein (BMP) signaling in osteoblast lineage cells by blocking cytoplasm-nucleus translocation of phosphorylated SMAD1/5/9 proteins. The protein is Transmembrane protein 53 (TMEM53) of Homo sapiens (Human).